Reading from the N-terminus, the 993-residue chain is Receptor-type tyrosine-protein kinase FLT3 (993 aa).

An N-terminal signal peptide occupies residues 1–26 (MPALARDGGQLPLLVVFSAMIFGTIT). Over 27 to 543 (NQDLPVIKCV…PFPFIQDNIS (517 aa)) the chain is Extracellular. A disulfide bridge links Cys-35 with Cys-65. N-linked (GlcNAc...) asparagine glycans are attached at residues Asn-43 and Asn-100. Cys-103 and Cys-114 form a disulfide bridge. Residue Asn-151 is glycosylated (N-linked (GlcNAc...) asparagine). Disulfide bonds link Cys-199/Cys-206, Cys-232/Cys-241, and Cys-272/Cys-330. The Ig-like C2-type domain occupies 253–343 (PQTTLPQLFL…KHPSQSALVT (91 aa)). N-linked (GlcNAc...) asparagine glycosylation is found at Asn-306, Asn-323, Asn-351, and Asn-354. 2 disulfide bridges follow: Cys-368–Cys-407 and Cys-381–Cys-392. N-linked (GlcNAc...) asparagine glycans are attached at residues Asn-473, Asn-502, and Asn-541. A helical transmembrane segment spans residues 544–563 (FYATIGVCLLFIVVLTLLIC). The Cytoplasmic segment spans residues 564–993 (HKYKKQFRYE…LSPQAQVEDS (430 aa)). Tyr-572 is modified (phosphotyrosine). Ser-574 carries the phosphoserine modification. Tyr-589, Tyr-591, and Tyr-599 each carry phosphotyrosine; by autocatalysis. The important for normal regulation of the kinase activity and for maintaining the kinase in an inactive state in the absence of bound ligand stretch occupies residues 591-597 (YVDFREY). The region spanning 610 to 943 (LEFGKVLGSG…PSFPNLTSFL (334 aa)) is the Protein kinase domain. Residues 616-624 (LGSGAFGKV) and Lys-644 each bind ATP. Tyr-726 bears the Phosphotyrosine; by autocatalysis mark. Ser-759 carries the post-translational modification Phosphoserine. Phosphotyrosine occurs at positions 768 and 793. The active-site Proton acceptor is the Asp-811. Residues Tyr-842, Tyr-955, and Tyr-969 each carry the phosphotyrosine; by autocatalysis modification. Position 993 is a phosphoserine (Ser-993).

It belongs to the protein kinase superfamily. Tyr protein kinase family. CSF-1/PDGF receptor subfamily. As to quaternary structure, monomer in the absence of bound FLT3LG. Homodimer in the presence of bound FLT3LG. Interacts with FIZ1 following ligand activation. Interacts with FES, FER, LYN, FGR, HCK, SRC and GRB2. Interacts with PTPRJ/DEP-1 and PTPN11/SHP2. Interacts with RNF115 and RNF126. (Microbial infection) Interacts with human cytomegalovirus protein UL7. Post-translationally, N-glycosylated, contains complex N-glycans with sialic acid. In terms of processing, autophosphorylated on several tyrosine residues in response to FLT3LG binding. FLT3LG binding also increases phosphorylation of mutant kinases that are constitutively activated. Dephosphorylated by PTPRJ/DEP-1, PTPN1, PTPN6/SHP-1, and to a lesser degree by PTPN12. Dephosphorylation is important for export from the endoplasmic reticulum and location at the cell membrane. Rapidly ubiquitinated by UBE2L6 and the E3 ubiquitin-protein ligase SIAH1 after autophosphorylation, leading to its proteasomal degradation. In terms of tissue distribution, detected in bone marrow, in hematopoietic stem cells, in myeloid progenitor cells and in granulocyte/macrophage progenitor cells (at protein level). Detected in bone marrow, liver, thymus, spleen and lymph node, and at low levels in kidney and pancreas. Highly expressed in T-cell leukemia.

The protein localises to the membrane. The protein resides in the endoplasmic reticulum lumen. The enzyme catalyses L-tyrosyl-[protein] + ATP = O-phospho-L-tyrosyl-[protein] + ADP + H(+). Its activity is regulated as follows. Present in an inactive conformation in the absence of bound ligand. FLT3LG binding leads to dimerization and activation by autophosphorylation. Its function is as follows. Tyrosine-protein kinase that acts as a cell-surface receptor for the cytokine FLT3LG and regulates differentiation, proliferation and survival of hematopoietic progenitor cells and of dendritic cells. Promotes phosphorylation of SHC1 and AKT1, and activation of the downstream effector MTOR. Promotes activation of RAS signaling and phosphorylation of downstream kinases, including MAPK1/ERK2 and/or MAPK3/ERK1. Promotes phosphorylation of FES, FER, PTPN6/SHP, PTPN11/SHP-2, PLCG1, and STAT5A and/or STAT5B. Activation of wild-type FLT3 causes only marginal activation of STAT5A or STAT5B. Mutations that cause constitutive kinase activity promote cell proliferation and resistance to apoptosis via the activation of multiple signaling pathways. In Homo sapiens (Human), this protein is Receptor-type tyrosine-protein kinase FLT3 (FLT3).